Consider the following 276-residue polypeptide: Sulfur carrier protein FdhD (276 aa).

Residue Cys-120 is the Cysteine persulfide intermediate of the active site.

It belongs to the FdhD family.

Its subcellular location is the cytoplasm. Its function is as follows. Required for formate dehydrogenase (FDH) activity. Acts as a sulfur carrier protein that transfers sulfur from IscS to the molybdenum cofactor prior to its insertion into FDH. This chain is Sulfur carrier protein FdhD, found in Bordetella bronchiseptica (strain ATCC BAA-588 / NCTC 13252 / RB50) (Alcaligenes bronchisepticus).